Reading from the N-terminus, the 234-residue chain is Small ribosomal subunit protein eS1y (234 aa).

A compositionally biased stretch (basic residues) spans 1-18 (MAVGKNKRISKGKKGGKK). The tract at residues 1–20 (MAVGKNKRISKGKKGGKKKA) is disordered.

The protein belongs to the eukaryotic ribosomal protein eS1 family. As to quaternary structure, component of the small ribosomal subunit. Mature ribosomes consist of a small (40S) and a large (60S) subunit. The 40S subunit contains about 33 different proteins and 1 molecule of RNA (18S). The 60S subunit contains about 49 different proteins and 3 molecules of RNA (25S, 5.8S and 5S).

The protein resides in the cytoplasm. The chain is Small ribosomal subunit protein eS1y from Vitis vinifera (Grape).